The following is a 226-amino-acid chain: UPF0758 protein Daro_3142 (226 aa).

The 124-residue stretch at 103–226 folds into the MPN domain; sequence SFTSPGKVRD…PLSFAERGLL (124 aa). Positions 174, 176, and 187 each coordinate Zn(2+). The JAMM motif signature appears at 174 to 187; it reads HNHPSGIAEPSRAD.

Belongs to the UPF0758 family.

The sequence is that of UPF0758 protein Daro_3142 from Dechloromonas aromatica (strain RCB).